The primary structure comprises 348 residues: Probable dual-specificity RNA methyltransferase RlmN (348 aa).

Glu89 acts as the Proton acceptor in catalysis. The 236-residue stretch at 95-330 (ERDHYTLCVS…NFVRFSKGVE (236 aa)) folds into the Radical SAM core domain. Cys102 and Cys335 are oxidised to a cystine. [4Fe-4S] cluster contacts are provided by Cys109, Cys113, and Cys116. S-adenosyl-L-methionine is bound by residues 157 to 158 (GE), Ser189, 214 to 216 (SLN), and Asn292. The active-site S-methylcysteine intermediate is Cys335.

It belongs to the radical SAM superfamily. RlmN family. The cofactor is [4Fe-4S] cluster.

The protein resides in the cytoplasm. It catalyses the reaction adenosine(2503) in 23S rRNA + 2 reduced [2Fe-2S]-[ferredoxin] + 2 S-adenosyl-L-methionine = 2-methyladenosine(2503) in 23S rRNA + 5'-deoxyadenosine + L-methionine + 2 oxidized [2Fe-2S]-[ferredoxin] + S-adenosyl-L-homocysteine. It carries out the reaction adenosine(37) in tRNA + 2 reduced [2Fe-2S]-[ferredoxin] + 2 S-adenosyl-L-methionine = 2-methyladenosine(37) in tRNA + 5'-deoxyadenosine + L-methionine + 2 oxidized [2Fe-2S]-[ferredoxin] + S-adenosyl-L-homocysteine. Functionally, specifically methylates position 2 of adenine 2503 in 23S rRNA and position 2 of adenine 37 in tRNAs. In Aquifex aeolicus (strain VF5), this protein is Probable dual-specificity RNA methyltransferase RlmN.